A 415-amino-acid polypeptide reads, in one-letter code: NPL4-like protein (415 aa).

One can recognise an MPN domain in the interval 130-279 (AASFDRDSAN…FEAFQMSEIC (150 aa)).

This sequence belongs to the NPL4 family.

Its subcellular location is the endoplasmic reticulum. It participates in protein degradation; proteasomal ubiquitin-dependent pathway. May be part of a complex that binds ubiquitinated proteins and that is necessary for the export of misfolded proteins from the ER to the cytoplasm, where they are degraded by the proteasome. This Oryza sativa subsp. japonica (Rice) protein is NPL4-like protein.